A 154-amino-acid chain; its full sequence is Ribonuclease HI (154 aa).

Positions 1 to 142 (MTKHVEIFTD…CDELARTAAE (142 aa)) constitute an RNase H type-1 domain. Mg(2+) contacts are provided by Asp10, Glu48, Asp70, and Asp134.

This sequence belongs to the RNase H family. Monomer. Mg(2+) serves as cofactor.

It localises to the cytoplasm. The enzyme catalyses Endonucleolytic cleavage to 5'-phosphomonoester.. In terms of biological role, endonuclease that specifically degrades the RNA of RNA-DNA hybrids. The polypeptide is Ribonuclease HI (Vibrio parahaemolyticus serotype O3:K6 (strain RIMD 2210633)).